Consider the following 317-residue polypeptide: Putative 2-hydroxyacid dehydrogenase SAOUHSC_02577 (317 aa).

NAD(+) is bound by residues 155–156 (EI), 234–236 (ASR), and Asp260. Arg236 is a catalytic residue. The active site involves Glu265. The Proton donor role is filled by His283. Position 283-286 (283-286 (HIGN)) interacts with NAD(+).

It belongs to the D-isomer specific 2-hydroxyacid dehydrogenase family.

The chain is Putative 2-hydroxyacid dehydrogenase SAOUHSC_02577 from Staphylococcus aureus (strain NCTC 8325 / PS 47).